Here is a 228-residue protein sequence, read N- to C-terminus: LOB domain-containing protein 30 (228 aa).

The region spanning 16–118 (GPCGACKFLR…TELSYLQAHL (103 aa)) is the LOB domain. The interval 188–228 (SNMGGGGELQALAREFIHGGQMPAQPSPGTSGSASSVIKRE) is disordered. Over residues 214–228 (SPGTSGSASSVIKRE) the composition is skewed to polar residues.

It belongs to the LOB domain-containing protein family. As to expression, expressed in roots, stems, leaves and flowers. Expressed in vascular tissues of hypocotyls, leaves, roots, developing floral organs and siliques.

Involved in the positive regulation of tracheary element (TE) differentiation. Involved in a positive feedback loop that maintains or promotes NAC030/VND7 expression that regulates TE differentiation-related genes. The protein is LOB domain-containing protein 30 (LBD30) of Arabidopsis thaliana (Mouse-ear cress).